The sequence spans 92 residues: Large ribosomal subunit protein eL43y (92 aa).

The C4-type zinc-finger motif lies at 39–60; the sequence is CEFCGKYGVKRKAVGIWGCKDC.

This sequence belongs to the eukaryotic ribosomal protein eL43 family.

This chain is Large ribosomal subunit protein eL43y (RPL37AC), found in Arabidopsis thaliana (Mouse-ear cress).